A 307-amino-acid chain; its full sequence is Predicted GPI-anchored protein 44 (307 aa).

The first 22 residues, 1 to 22 (MLSTNNLLILLIFSFLITNVKS), serve as a signal peptide directing secretion. Residues asparagine 146 and asparagine 217 are each glycosylated (N-linked (GlcNAc...) asparagine). Residues 232-261 (TPQPLLETPSQESSAPNIDSTTPTTIDNTV) are disordered. The segment covering 239-254 (TPSQESSAPNIDSTTP) has biased composition (polar residues). The GPI-anchor amidated glycine moiety is linked to residue glycine 286. The propeptide at 287 to 307 (GAMGYPSISVALGLVFIAYLV) is removed in mature form.

The protein localises to the cell membrane. The protein is Predicted GPI-anchored protein 44 (PGA44) of Candida albicans (strain SC5314 / ATCC MYA-2876) (Yeast).